We begin with the raw amino-acid sequence, 156 residues long: Endoribonuclease YbeY (156 aa).

The Zn(2+) site is built by His-117, His-121, and His-127.

The protein belongs to the endoribonuclease YbeY family. Zn(2+) is required as a cofactor.

It localises to the cytoplasm. Functionally, single strand-specific metallo-endoribonuclease involved in late-stage 70S ribosome quality control and in maturation of the 3' terminus of the 16S rRNA. In Shewanella halifaxensis (strain HAW-EB4), this protein is Endoribonuclease YbeY.